The sequence spans 370 residues: CCA-adding enzyme (370 aa).

Positions 8 and 11 each coordinate ATP. 2 residues coordinate CTP: Gly-8 and Arg-11. Residues Asp-21 and Asp-23 each contribute to the Mg(2+) site. Positions 91, 137, and 140 each coordinate ATP. Arg-91, Arg-137, and Arg-140 together coordinate CTP.

Belongs to the tRNA nucleotidyltransferase/poly(A) polymerase family. Bacterial CCA-adding enzyme type 2 subfamily. It depends on Mg(2+) as a cofactor.

It carries out the reaction a tRNA precursor + 2 CTP + ATP = a tRNA with a 3' CCA end + 3 diphosphate. The enzyme catalyses a tRNA with a 3' CCA end + 2 CTP + ATP = a tRNA with a 3' CCACCA end + 3 diphosphate. Its function is as follows. Catalyzes the addition and repair of the essential 3'-terminal CCA sequence in tRNAs without using a nucleic acid template. Adds these three nucleotides in the order of C, C, and A to the tRNA nucleotide-73, using CTP and ATP as substrates and producing inorganic pyrophosphate. tRNA 3'-terminal CCA addition is required both for tRNA processing and repair. Also involved in tRNA surveillance by mediating tandem CCA addition to generate a CCACCA at the 3' terminus of unstable tRNAs. While stable tRNAs receive only 3'-terminal CCA, unstable tRNAs are marked with CCACCA and rapidly degraded. This is CCA-adding enzyme from Pseudomonas putida (strain W619).